A 418-amino-acid chain; its full sequence is AP-3 complex subunit mu-1 (418 aa).

One can recognise an MHD domain in the interval 176 to 417; the sequence is NNEAYFDVVE…ITKAGKFQVR (242 aa).

This sequence belongs to the adaptor complexes medium subunit family. As to quaternary structure, adaptor protein complex 3 (AP-3) is a heterotetramer composed of two large adaptins (delta-type subunit AP3D1 and beta-type subunit AP3B1 or AP3B2), a medium adaptin (mu-type subunit AP3M1 or AP3M2) and a small adaptin (sigma-type subunit APS1 or AP3S2). Interacts with AGAP1. AP-3 associates with the BLOC-1 complex.

It is found in the golgi apparatus. Its subcellular location is the cytoplasmic vesicle membrane. Part of the AP-3 complex, an adaptor-related complex which is not clathrin-associated. The complex is associated with the Golgi region as well as more peripheral structures. It facilitates the budding of vesicles from the Golgi membrane and may be directly involved in trafficking to lysosomes. In concert with the BLOC-1 complex, AP-3 is required to target cargos into vesicles assembled at cell bodies for delivery into neurites and nerve terminals. The polypeptide is AP-3 complex subunit mu-1 (Ap3m1) (Rattus norvegicus (Rat)).